A 448-amino-acid polypeptide reads, in one-letter code: Glucose-6-phosphate isomerase (448 aa).

E290 acts as the Proton donor in catalysis. Active-site residues include H311 and K425.

The protein belongs to the GPI family.

It localises to the cytoplasm. The enzyme catalyses alpha-D-glucose 6-phosphate = beta-D-fructose 6-phosphate. It functions in the pathway carbohydrate biosynthesis; gluconeogenesis. It participates in carbohydrate degradation; glycolysis; D-glyceraldehyde 3-phosphate and glycerone phosphate from D-glucose: step 2/4. Catalyzes the reversible isomerization of glucose-6-phosphate to fructose-6-phosphate. In Latilactobacillus sakei subsp. sakei (strain 23K) (Lactobacillus sakei subsp. sakei), this protein is Glucose-6-phosphate isomerase.